We begin with the raw amino-acid sequence, 347 residues long: Heme A synthase (347 aa).

8 consecutive transmembrane segments (helical) span residues 14 to 34 (VKIW…IGGI), 96 to 116 (FHRL…LYFM), 129 to 149 (FILI…MVKS), 162 to 182 (LAMH…HFLL), 199 to 219 (VFYI…LVAG), 260 to 280 (FIHE…LLVL), 287 to 307 (MYLL…TFIY), and 311 to 331 (IILA…SIYL). H262 contacts heme. Heme is bound at residue H317.

Belongs to the COX15/CtaA family. Type 2 subfamily. Interacts with CtaB. Requires heme b as cofactor.

It localises to the cell membrane. The catalysed reaction is Fe(II)-heme o + 2 A + H2O = Fe(II)-heme a + 2 AH2. It functions in the pathway porphyrin-containing compound metabolism; heme A biosynthesis; heme A from heme O: step 1/1. In terms of biological role, catalyzes the conversion of heme O to heme A by two successive hydroxylations of the methyl group at C8. The first hydroxylation forms heme I, the second hydroxylation results in an unstable dihydroxymethyl group, which spontaneously dehydrates, resulting in the formyl group of heme A. This chain is Heme A synthase, found in Ehrlichia ruminantium (strain Welgevonden).